The following is a 478-amino-acid chain: Protein nucleotidyltransferase YdiU (478 aa).

ATP-binding residues include Gly-84, Gly-86, Arg-87, Lys-107, Asp-119, Gly-120, Arg-170, and Arg-177. Asp-246 (proton acceptor) is an active-site residue. The Mg(2+) site is built by Asn-247 and Asp-256. Asp-256 is an ATP binding site.

This sequence belongs to the SELO family. The cofactor is Mg(2+). Mn(2+) serves as cofactor.

The enzyme catalyses L-seryl-[protein] + ATP = 3-O-(5'-adenylyl)-L-seryl-[protein] + diphosphate. It catalyses the reaction L-threonyl-[protein] + ATP = 3-O-(5'-adenylyl)-L-threonyl-[protein] + diphosphate. The catalysed reaction is L-tyrosyl-[protein] + ATP = O-(5'-adenylyl)-L-tyrosyl-[protein] + diphosphate. It carries out the reaction L-histidyl-[protein] + UTP = N(tele)-(5'-uridylyl)-L-histidyl-[protein] + diphosphate. The enzyme catalyses L-seryl-[protein] + UTP = O-(5'-uridylyl)-L-seryl-[protein] + diphosphate. It catalyses the reaction L-tyrosyl-[protein] + UTP = O-(5'-uridylyl)-L-tyrosyl-[protein] + diphosphate. In terms of biological role, nucleotidyltransferase involved in the post-translational modification of proteins. It can catalyze the addition of adenosine monophosphate (AMP) or uridine monophosphate (UMP) to a protein, resulting in modifications known as AMPylation and UMPylation. This Escherichia coli O127:H6 (strain E2348/69 / EPEC) protein is Protein nucleotidyltransferase YdiU.